Consider the following 233-residue polypeptide: Biosynthetic peptidoglycan transglycosylase (233 aa).

The helical transmembrane segment at 8 to 28 (LIALPVGIFIFFNAYVYGNII) threads the bilayer.

This sequence belongs to the glycosyltransferase 51 family.

The protein localises to the cell inner membrane. The catalysed reaction is [GlcNAc-(1-&gt;4)-Mur2Ac(oyl-L-Ala-gamma-D-Glu-L-Lys-D-Ala-D-Ala)](n)-di-trans,octa-cis-undecaprenyl diphosphate + beta-D-GlcNAc-(1-&gt;4)-Mur2Ac(oyl-L-Ala-gamma-D-Glu-L-Lys-D-Ala-D-Ala)-di-trans,octa-cis-undecaprenyl diphosphate = [GlcNAc-(1-&gt;4)-Mur2Ac(oyl-L-Ala-gamma-D-Glu-L-Lys-D-Ala-D-Ala)](n+1)-di-trans,octa-cis-undecaprenyl diphosphate + di-trans,octa-cis-undecaprenyl diphosphate + H(+). Its pathway is cell wall biogenesis; peptidoglycan biosynthesis. In terms of biological role, peptidoglycan polymerase that catalyzes glycan chain elongation from lipid-linked precursors. The chain is Biosynthetic peptidoglycan transglycosylase from Neisseria meningitidis serogroup A / serotype 4A (strain DSM 15465 / Z2491).